Reading from the N-terminus, the 171-residue chain is UPF0398 protein stu0232 (171 aa).

Belongs to the UPF0398 family.

The chain is UPF0398 protein stu0232 from Streptococcus thermophilus (strain ATCC BAA-250 / LMG 18311).